We begin with the raw amino-acid sequence, 240 residues long: Probable phosphatase Athe_0620 (240 aa).

Zn(2+)-binding residues include His8, His10, His16, His41, Glu74, His102, His132, Asp192, and His194.

Belongs to the PHP family. The cofactor is Zn(2+).

The sequence is that of Probable phosphatase Athe_0620 from Caldicellulosiruptor bescii (strain ATCC BAA-1888 / DSM 6725 / KCTC 15123 / Z-1320) (Anaerocellum thermophilum).